Here is a 623-residue protein sequence, read N- to C-terminus: UvrABC system protein C (623 aa).

The GIY-YIG domain maps to 21 to 100; sequence AEPGVYLMRD…IKTHQPPYNV (80 aa). Residues 210–245 enclose the UVR domain; sequence DELIRELQEKMIQAAEQENYEAAARYRDQIRGLEQL.

Belongs to the UvrC family. Interacts with UvrB in an incision complex.

The protein resides in the cytoplasm. The UvrABC repair system catalyzes the recognition and processing of DNA lesions. UvrC both incises the 5' and 3' sides of the lesion. The N-terminal half is responsible for the 3' incision and the C-terminal half is responsible for the 5' incision. The polypeptide is UvrABC system protein C (Synechococcus sp. (strain JA-2-3B'a(2-13)) (Cyanobacteria bacterium Yellowstone B-Prime)).